A 264-amino-acid chain; its full sequence is MIQVENLSFSYQNNKVFKNLSFSIKKGEYLCIIGKNGSGKSTLAKLLAGLIFKQEGSIKISGYDTKNQKDLLEIRKLVGIIFQNPENQIINTTVFDEVVFGLENLATPRENIKEIAENSLKSVALLEYKDRLTYQLSGGEKQRLAIASVLAMGTEILIFDEAISMLDPVGKKEVLKLMKELNSQGKTIIHITHNRNDILEASEVMVLSNGEIKYQGNPYKIFEDDEFNPFLIKIKNILEKNNIKIDDKNINMEDLVRLVYENIS.

An ABC transporter domain is found at 2–234 (IQVENLSFSY…DEFNPFLIKI (233 aa)). An ATP-binding site is contributed by 34-41 (GKNGSGKS).

The protein belongs to the ABC transporter superfamily. Energy-coupling factor EcfA family. As to quaternary structure, forms a stable energy-coupling factor (ECF) transporter complex composed of 2 membrane-embedded substrate-binding proteins (S component), 2 ATP-binding proteins (A component) and 2 transmembrane proteins (T component).

The protein localises to the cell inner membrane. Functionally, ATP-binding (A) component of a common energy-coupling factor (ECF) ABC-transporter complex. Unlike classic ABC transporters this ECF transporter provides the energy necessary to transport a number of different substrates. The protein is Energy-coupling factor transporter ATP-binding protein EcfA1 of Fusobacterium nucleatum subsp. nucleatum (strain ATCC 25586 / DSM 15643 / BCRC 10681 / CIP 101130 / JCM 8532 / KCTC 2640 / LMG 13131 / VPI 4355).